A 66-amino-acid polypeptide reads, in one-letter code: Stress-associated endoplasmic reticulum protein 1 (66 aa).

The tract at residues 1–33 (MVAKQRIRMANEKHSKNITQRGNVAKTSRNAPG) is disordered. Topologically, residues 1 to 38 (MVAKQRIRMANEKHSKNITQRGNVAKTSRNAPGEKASV) are cytoplasmic. The segment covering 17 to 30 (NITQRGNVAKTSRN) has biased composition (polar residues). Residues 39 to 59 (GPWLLALFIFVVCGSAIFQII) form a helical membrane-spanning segment. Topologically, residues 60–66 (QSIRMGM) are extracellular.

It belongs to the RAMP4 family. As to quaternary structure, interacts with SEC61B, SEC61A1 and the SEC61 complex. Interacts with CANX.

The protein resides in the membrane. It is found in the endoplasmic reticulum membrane. Functionally, interacts with target proteins during their translocation into the lumen of the endoplasmic reticulum. Protects unfolded target proteins against degradation during ER stress. May facilitate glycosylation of target proteins after termination of ER stress. May modulate the use of N-glycosylation sites on target proteins. This Pongo abelii (Sumatran orangutan) protein is Stress-associated endoplasmic reticulum protein 1 (SERP1).